The sequence spans 406 residues: Cysteine desulfurase (406 aa).

At K226 the chain carries N6-(pyridoxal phosphate)lysine. C364 serves as the catalytic Cysteine persulfide intermediate.

Belongs to the class-V pyridoxal-phosphate-dependent aminotransferase family. Csd subfamily. As to quaternary structure, homodimer. Interacts with SufE and the SufBCD complex composed of SufB, SufC and SufD. The interaction with SufE is required to mediate the direct transfer of the sulfur atom from the S-sulfanylcysteine. Pyridoxal 5'-phosphate is required as a cofactor.

It is found in the cytoplasm. It catalyses the reaction (sulfur carrier)-H + L-cysteine = (sulfur carrier)-SH + L-alanine. The enzyme catalyses L-selenocysteine + AH2 = hydrogenselenide + L-alanine + A + H(+). It participates in cofactor biosynthesis; iron-sulfur cluster biosynthesis. Cysteine desulfurases mobilize the sulfur from L-cysteine to yield L-alanine, an essential step in sulfur metabolism for biosynthesis of a variety of sulfur-containing biomolecules. Component of the suf operon, which is activated and required under specific conditions such as oxidative stress and iron limitation. Acts as a potent selenocysteine lyase in vitro, that mobilizes selenium from L-selenocysteine. Selenocysteine lyase activity is however unsure in vivo. The chain is Cysteine desulfurase from Escherichia coli O139:H28 (strain E24377A / ETEC).